Consider the following 376-residue polypeptide: MRLFVSRRVKRWKIFHFFVTCFILSFMVFWSPINNYIMSHMKSYSYRYLVNSYGFVNNSLSLKHSSVQPHYPYLINHREKCQAQDVLLLLFIKTAPENYGRRSAIRKTWGNENYVQSQLNANIKILFALGTPGPLKGKELQKRLIGEDQVYKDIIQQDFIDSFHNLTSKFLLQFSWANTFCPHAKFLMTADDDIFIHMPNLIEYLQGLEQIGVRDFWIGHVHRGGPPVRDKSSKYYVPYEMYKWPAYPDYTAGAAYVVSRDVAAKIYEASQTLNSSMYIDDVFMGLCANKVGILPQDHVFFSGEGKIPYHPCIYEKMMTSHGHLQDLQDLWIEATHPKVKNISKGFFGQIYCRLIKIVLLCRLTYRNSYPCWAAFA.

The Cytoplasmic portion of the chain corresponds to 1–13; the sequence is MRLFVSRRVKRWK. Residues 14-34 form a helical; Signal-anchor for type II membrane protein membrane-spanning segment; it reads IFHFFVTCFILSFMVFWSPIN. The Lumenal portion of the chain corresponds to 35–376; that stretch reads NYIMSHMKSY…NSYPCWAAFA (342 aa). A glycan (N-linked (GlcNAc...) asparagine) is linked at Asn-57.

It belongs to the glycosyltransferase 31 family. In terms of tissue distribution, highly expressed in adult spleen, placenta and cerebellar Purkinje cells where it colocalizes with HNK-1. Expressed at lower level in brain, lung, thymus and muscle.

The protein resides in the golgi apparatus membrane. The enzyme catalyses a beta-D-Gal-(1-&gt;4)-beta-D-Glc-(1&lt;-&gt;1)-Cer(d18:1(4E)) + UDP-N-acetyl-alpha-D-glucosamine = a beta-D-GlcNAc-(1-&gt;3)-beta-D-Gal-(1-&gt;4)-beta-D-Glc-(1&lt;-&gt;1)-Cer(d18:1(4E)) + UDP + H(+). It catalyses the reaction a neolactoside nLc4Cer(d18:1(4E)) + UDP-N-acetyl-alpha-D-glucosamine = a neolactoside IV(3)-beta-GlcNAc-nLc4Cer(d18:1(4E)) + UDP + H(+). It participates in protein modification; protein glycosylation. Beta-1,3-N-acetylglucosaminyltransferase that plays a key role in the synthesis of lacto- or neolacto-series carbohydrate chains on glycolipids, notably by participating in biosynthesis of HNK-1 and Lewis X carbohydrate structures. Has strong activity toward lactosylceramide (LacCer) and neolactotetraosylceramide (nLc(4)Cer; paragloboside), resulting in the synthesis of Lc(3)Cer and neolactopentaosylceramide (nLc(5)Cer), respectively. Plays a central role in regulating neolacto-series glycolipid synthesis during embryonic development. This Mus musculus (Mouse) protein is Lactosylceramide 1,3-N-acetyl-beta-D-glucosaminyltransferase.